We begin with the raw amino-acid sequence, 101 residues long: Protein Tat (101 aa).

The interval M1–N24 is interaction with human CREBBP. A transactivation region spans residues M1 to G48. Zn(2+) is bound by residues C22, C25, and C27. The interval C22–C37 is cysteine-rich. K28 is modified (N6-acetyllysine; by host PCAF). Zn(2+)-binding residues include C30, H33, C34, and C37. A core region spans residues F38–G48. The span at G48 to R57 shows a compositional bias: basic residues. The tract at residues G48–D101 is disordered. The Nuclear localization signal, RNA-binding (TAR), and protein transduction signature appears at R49–R57. The tract at residues R49–E86 is interaction with the host capping enzyme RNGTT. N6-acetyllysine; by host EP300 and GCN5L2 is present on residues K50 and K51. Asymmetric dimethylarginine; by host PRMT6 occurs at positions 52 and 53. Positions Q60 to G79 are enriched in polar residues. Residue K71 forms a Glycyl lysine isopeptide (Lys-Gly) (interchain with G-Cter in ubiquitin) linkage. Residues R78–D80 carry the Cell attachment site motif. The segment covering E86–D101 has biased composition (basic and acidic residues).

Belongs to the lentiviruses Tat family. As to quaternary structure, interacts with host CCNT1. Associates with the P-TEFb complex composed at least of Tat, P-TEFb (CDK9 and CCNT1), TAR RNA, RNA Pol II. Recruits the HATs CREBBP, TAF1/TFIID, EP300, PCAF and GCN5L2. Interacts with host KAT5/Tip60; this interaction targets the latter to degradation. Interacts with the host deacetylase SIRT1. Interacts with host capping enzyme RNGTT; this interaction stimulates RNGTT. Binds to host KDR, and to the host integrins ITGAV/ITGB3 and ITGA5/ITGB1. Interacts with host KPNB1/importin beta-1 without previous binding to KPNA1/importin alpha-1. Interacts with EIF2AK2. Interacts with host nucleosome assembly protein NAP1L1; this interaction may be required for the transport of Tat within the nucleus, since the two proteins interact at the nuclear rim. Interacts with host C1QBP/SF2P32; this interaction involves lysine-acetylated Tat. Interacts with the host chemokine receptors CCR2, CCR3 and CXCR4. Interacts with host DPP4/CD26; this interaction may trigger an anti-proliferative effect. Interacts with host LDLR. Interacts with the host extracellular matrix metalloproteinase MMP1. Interacts with host PRMT6; this interaction mediates Tat's methylation. Interacts with, and is ubiquitinated by MDM2/Hdm2. Interacts with host PSMC3 and HTATIP2. Interacts with STAB1; this interaction may overcome SATB1-mediated repression of IL2 and IL2RA (interleukin) in T cells by binding to the same domain than HDAC1. Interacts (when acetylated) with human CDK13, thereby increasing HIV-1 mRNA splicing and promoting the production of the doubly spliced HIV-1 protein Nef. Interacts with host TBP; this interaction modulates the activity of transcriptional pre-initiation complex. Interacts with host RELA. Interacts with host PLSCR1; this interaction negatively regulates Tat transactivation activity by altering its subcellular distribution. In terms of processing, asymmetrical arginine methylation by host PRMT6 seems to diminish the transactivation capacity of Tat and affects the interaction with host CCNT1. Acetylation by EP300, CREBBP, GCN5L2/GCN5 and PCAF regulates the transactivation activity of Tat. EP300-mediated acetylation of Lys-50 promotes dissociation of Tat from the TAR RNA through the competitive binding to PCAF's bromodomain. In addition, the non-acetylated Tat's N-terminus can also interact with PCAF. PCAF-mediated acetylation of Lys-28 enhances Tat's binding to CCNT1. Lys-50 is deacetylated by SIRT1. Post-translationally, polyubiquitination by host MDM2 does not target Tat to degradation, but activates its transactivation function and fosters interaction with CCNT1 and TAR RNA. In terms of processing, phosphorylated by EIF2AK2 on serine and threonine residues adjacent to the basic region important for TAR RNA binding and function. Phosphorylation of Tat by EIF2AK2 is dependent on the prior activation of EIF2AK2 by dsRNA.

Its subcellular location is the host nucleus. The protein resides in the host nucleolus. It localises to the host cytoplasm. It is found in the secreted. Its function is as follows. Transcriptional activator that increases RNA Pol II processivity, thereby increasing the level of full-length viral transcripts. Recognizes a hairpin structure at the 5'-LTR of the nascent viral mRNAs referred to as the transactivation responsive RNA element (TAR) and recruits the cyclin T1-CDK9 complex (P-TEFb complex) that will in turn hyperphosphorylate the RNA polymerase II to allow efficient elongation. The CDK9 component of P-TEFb and other Tat-activated kinases hyperphosphorylate the C-terminus of RNA Pol II that becomes stabilized and much more processive. Other factors such as HTATSF1/Tat-SF1, SUPT5H/SPT5, and HTATIP2 are also important for Tat's function. Besides its effect on RNA Pol II processivity, Tat induces chromatin remodeling of proviral genes by recruiting the histone acetyltransferases (HATs) CREBBP, EP300 and PCAF to the chromatin. This also contributes to the increase in proviral transcription rate, especially when the provirus integrates in transcriptionally silent region of the host genome. To ensure maximal activation of the LTR, Tat mediates nuclear translocation of NF-kappa-B by interacting with host RELA. Through its interaction with host TBP, Tat may also modulate transcription initiation. Tat can reactivate a latently infected cell by penetrating in it and transactivating its LTR promoter. In the cytoplasm, Tat is thought to act as a translational activator of HIV-1 mRNAs. Functionally, extracellular circulating Tat can be endocytosed by surrounding uninfected cells via the binding to several surface receptors such as CD26, CXCR4, heparan sulfate proteoglycans (HSPG) or LDLR. Neurons are rarely infected, but they internalize Tat via their LDLR. Through its interaction with nuclear HATs, Tat is potentially able to control the acetylation-dependent cellular gene expression. Modulates the expression of many cellular genes involved in cell survival, proliferation or in coding for cytokines or cytokine receptors. Tat plays a role in T-cell and neurons apoptosis. Tat induced neurotoxicity and apoptosis probably contribute to neuroAIDS. Circulating Tat also acts as a chemokine-like and/or growth factor-like molecule that binds to specific receptors on the surface of the cells, affecting many cellular pathways. In the vascular system, Tat binds to ITGAV/ITGB3 and ITGA5/ITGB1 integrins dimers at the surface of endothelial cells and competes with bFGF for heparin-binding sites, leading to an excess of soluble bFGF. The sequence is that of Protein Tat from Homo sapiens (Human).